We begin with the raw amino-acid sequence, 160 residues long: Eukaryotic translation initiation factor 5A-3 (160 aa).

Over residues 1-12 the composition is skewed to basic and acidic residues; it reads MSDEEHHFESKA. The disordered stretch occupies residues 1 to 21; sequence MSDEEHHFESKADAGASKTYP. A Hypusine modification is found at Lys-52.

Belongs to the eIF-5A family. Post-translationally, lys-52 undergoes hypusination, a unique post-translational modification that consists in the addition of a butylamino group from spermidine to lysine side chain, leading to the formation of the unusual amino acid hypusine. eIF-5As are the only known proteins to undergo this modification, which is essential for their function.

Translation factor that promotes translation elongation and termination, particularly upon ribosome stalling at specific amino acid sequence contexts. Binds between the exit (E) and peptidyl (P) site of the ribosome and promotes rescue of stalled ribosome: specifically required for efficient translation of polyproline-containing peptides as well as other motifs that stall the ribosome. Acts as a ribosome quality control (RQC) cofactor by joining the RQC complex to facilitate peptidyl transfer during CAT tailing step. The protein is Eukaryotic translation initiation factor 5A-3 (EIF5A3) of Solanum tuberosum (Potato).